The primary structure comprises 428 residues: Enolase (428 aa).

Glutamine 163 is a binding site for (2R)-2-phosphoglycerate. The active-site Proton donor is glutamate 205. Mg(2+) contacts are provided by aspartate 242, glutamate 285, and aspartate 312. 4 residues coordinate (2R)-2-phosphoglycerate: lysine 337, arginine 366, serine 367, and lysine 388. Lysine 337 (proton acceptor) is an active-site residue.

Belongs to the enolase family. Mg(2+) is required as a cofactor.

It localises to the cytoplasm. It is found in the secreted. The protein localises to the cell surface. The catalysed reaction is (2R)-2-phosphoglycerate = phosphoenolpyruvate + H2O. It participates in carbohydrate degradation; glycolysis; pyruvate from D-glyceraldehyde 3-phosphate: step 4/5. Catalyzes the reversible conversion of 2-phosphoglycerate (2-PG) into phosphoenolpyruvate (PEP). It is essential for the degradation of carbohydrates via glycolysis. The chain is Enolase from Neisseria gonorrhoeae (strain ATCC 700825 / FA 1090).